Reading from the N-terminus, the 352-residue chain is Molybdenum import ATP-binding protein ModC (352 aa).

Positions 1-229 (MLELNFSQTL…SVMHPWLPKE (229 aa)) constitute an ABC transporter domain. 31–38 (GVSGAGKT) contacts ATP. Positions 289–352 (QTSIRNVLRA…AQVKSVSITA (64 aa)) constitute a Mop domain.

The protein belongs to the ABC transporter superfamily. Molybdate importer (TC 3.A.1.8) family. The complex is composed of two ATP-binding proteins (ModC), two transmembrane proteins (ModB) and a solute-binding protein (ModA).

It localises to the cell inner membrane. The enzyme catalyses molybdate(out) + ATP + H2O = molybdate(in) + ADP + phosphate + H(+). In terms of biological role, part of the ABC transporter complex ModABC involved in molybdenum import. Responsible for energy coupling to the transport system. This chain is Molybdenum import ATP-binding protein ModC, found in Salmonella typhi.